The sequence spans 300 residues: NAD kinase (300 aa).

The active-site Proton acceptor is the Asp75. Residues 75 to 76 (DG), 149 to 150 (ND), Arg177, Asp179, 190 to 195 (TAYALS), Ala214, and Gln248 each bind NAD(+).

Belongs to the NAD kinase family. Requires a divalent metal cation as cofactor.

The protein localises to the cytoplasm. The enzyme catalyses NAD(+) + ATP = ADP + NADP(+) + H(+). Its function is as follows. Involved in the regulation of the intracellular balance of NAD and NADP, and is a key enzyme in the biosynthesis of NADP. Catalyzes specifically the phosphorylation on 2'-hydroxyl of the adenosine moiety of NAD to yield NADP. The polypeptide is NAD kinase (Burkholderia multivorans (strain ATCC 17616 / 249)).